Consider the following 437-residue polypeptide: GTPase Obg (437 aa).

An Obg domain is found at 2–160 (SMFLDTAKIK…RNLELELKVL (159 aa)). Positions 161-338 (ADVGLVGFPS…LLEATAELLE (178 aa)) constitute an OBG-type G domain. Residues 167–174 (GFPSVGKS), 192–196 (FTTIV), 214–217 (DLPG), 284–287 (NKMD), and 319–321 (SGI) each bind GTP. Positions 174 and 194 each coordinate Mg(2+). In terms of domain architecture, OCT spans 359–437 (GFNPDEPEFA…IGKFEFEFVD (79 aa)).

It belongs to the TRAFAC class OBG-HflX-like GTPase superfamily. OBG GTPase family. In terms of assembly, monomer. The cofactor is Mg(2+).

The protein localises to the cytoplasm. An essential GTPase which binds GTP, GDP and possibly (p)ppGpp with moderate affinity, with high nucleotide exchange rates and a fairly low GTP hydrolysis rate. Plays a role in control of the cell cycle, stress response, ribosome biogenesis and in those bacteria that undergo differentiation, in morphogenesis control. The chain is GTPase Obg from Streptococcus suis (strain 98HAH33).